We begin with the raw amino-acid sequence, 84 residues long: U4-theraphotoxin-Hhn1a (84 aa).

The signal sequence occupies residues 1–22 (MKVTLIAIPTCAAVLVLHTTAA). A propeptide spanning residues 23–47 (EELEESQLMEVGMPDTELAAVDEER) is cleaved from the precursor. 3 cysteine pairs are disulfide-bonded: Cys51/Cys65, Cys55/Cys76, and Cys70/Cys81.

Belongs to the neurotoxin 12 (Hwtx-2) family. 02 (Hwtx-2) subfamily. In terms of tissue distribution, expressed by the venom gland.

Its subcellular location is the secreted. Its function is as follows. Postsynaptic neurotoxin. In Cyriopagopus hainanus (Chinese bird spider), this protein is U4-theraphotoxin-Hhn1a.